Consider the following 113-residue polypeptide: UPF0321 protein C569.02c (113 aa).

An N-terminal signal peptide occupies residues 1–17 (MLLLFCICCAFIKLVLA). N-linked (GlcNAc...) asparagine glycosylation is found at asparagine 20, asparagine 39, and asparagine 65.

It belongs to the UPF0321 family.

This chain is UPF0321 protein C569.02c, found in Schizosaccharomyces pombe (strain 972 / ATCC 24843) (Fission yeast).